The primary structure comprises 179 residues: Sec-independent protein translocase protein TatB (179 aa).

A helical transmembrane segment spans residues 1–21 (MLDLGLSKMALIGVVALVVLG). Residues 101 to 115 (GAAGDAGSVGSPGSD) show a composition bias toward low complexity. Positions 101–134 (GAAGDAGSVGSPGSDTPAAPSWRGSSAALAPKRR) are disordered.

This sequence belongs to the TatB family. As to quaternary structure, the Tat system comprises two distinct complexes: a TatABC complex, containing multiple copies of TatA, TatB and TatC subunits, and a separate TatA complex, containing only TatA subunits. Substrates initially bind to the TatABC complex, which probably triggers association of the separate TatA complex to form the active translocon.

It localises to the cell inner membrane. Part of the twin-arginine translocation (Tat) system that transports large folded proteins containing a characteristic twin-arginine motif in their signal peptide across membranes. Together with TatC, TatB is part of a receptor directly interacting with Tat signal peptides. TatB may form an oligomeric binding site that transiently accommodates folded Tat precursor proteins before their translocation. In Burkholderia orbicola (strain AU 1054), this protein is Sec-independent protein translocase protein TatB.